A 360-amino-acid chain; its full sequence is Glutamate 5-kinase (360 aa).

Lysine 7 contributes to the ATP binding site. Substrate-binding residues include serine 47, aspartate 134, and asparagine 146. Residues 166–167 (TD) and 208–214 (TGGIKTK) each bind ATP. Residues 273 to 344 (VGEIHLDDGA…IGINSRSETT (72 aa)) enclose the PUA domain.

The protein belongs to the glutamate 5-kinase family.

Its subcellular location is the cytoplasm. The enzyme catalyses L-glutamate + ATP = L-glutamyl 5-phosphate + ADP. It functions in the pathway amino-acid biosynthesis; L-proline biosynthesis; L-glutamate 5-semialdehyde from L-glutamate: step 1/2. Functionally, catalyzes the transfer of a phosphate group to glutamate to form L-glutamate 5-phosphate. The sequence is that of Glutamate 5-kinase from Prochlorococcus marinus (strain NATL2A).